The primary structure comprises 775 residues: Glutamine--tRNA ligase (775 aa).

Ala-2 bears the N-acetylalanine mark. Ser-70 carries the phosphoserine modification. The 'HIGH' region motif lies at 270–280 (PEPNGILHIGH). Residues 271 to 273 (EPN) and 277 to 283 (HIGHAKA) contribute to the ATP site. An L-glutamine-binding site is contributed by Asp-303. Lys-309 carries the N6-acetyllysine modification. Residue Tyr-438 coordinates L-glutamine. Residues Thr-457, 486-487 (RL), and 494-496 (VSK) contribute to the ATP site. The 'KMSKS' region motif lies at 493–497 (VVSKR). Position 495 is a phosphoserine (Ser-495).

Belongs to the class-I aminoacyl-tRNA synthetase family. In terms of assembly, monomer. Part of a multisubunit complex that groups tRNA ligases for Arg (RARS1), Asp (DARS1), Gln (QARS1), Ile (IARS1), Leu (LARS1), Lys (KARS1), Met (MARS1) the bifunctional ligase for Glu and Pro (EPRS1) and the auxiliary subunits AIMP1/p43, AIMP2/p38 and EEF1E1/p18. Interacts with RARS1. Part of a complex composed of RARS1, QARS1 and AIMP1.

The protein resides in the cytoplasm. Its subcellular location is the cytosol. It carries out the reaction tRNA(Gln) + L-glutamine + ATP = L-glutaminyl-tRNA(Gln) + AMP + diphosphate. Functionally, glutamine--tRNA ligase. Plays a critical role in brain development. The polypeptide is Glutamine--tRNA ligase (QARS1) (Bos taurus (Bovine)).